A 1006-amino-acid chain; its full sequence is Unconventional myosin-Id (1006 aa).

A2 is subject to N-acetylalanine. The Myosin motor domain maps to 9-695 (FGKADFVLMD…TLFTLEELRA (687 aa)). 102 to 109 (GESGAGKT) serves as a coordination point for ATP. The residue at position 200 (S200) is a Phosphoserine. Y536 bears the Phosphotyrosine mark. The tract at residues 572 to 594 (MIALVDNLASKEPYYVRCIKPND) is actin-binding. IQ domains lie at 699–719 (IRIVLFLQKVWRGTLARMRYK) and 721–741 (TKAALTIIRYYRRYKVKSYIH). In terms of domain architecture, TH1 spans 812-1005 (GQRADLGLQR…RSGFILSVPG (194 aa)).

The protein belongs to the TRAFAC class myosin-kinesin ATPase superfamily. Myosin family. Interacts (via the two IQ motifs) with calmodulin. Binds an additional calmodulin chain via a third, C-terminal region. Interacts with F-actin. In terms of tissue distribution, expressed in many tissues. Highest levels in brain, followed by lung and ovary; expression is lowest in spleen.

It is found in the cytoplasm. The protein resides in the perikaryon. Its subcellular location is the cell projection. The protein localises to the dendrite. It localises to the early endosome. It is found in the cell cortex. Its function is as follows. Unconventional myosin that functions as actin-based motor protein with ATPase activity. Plays a role in endosomal protein trafficking, and especially in the transfer of cargo proteins from early to recycling endosomes. Required for normal planar cell polarity in ciliated tracheal cells, for normal rotational polarity of cilia, and for coordinated, unidirectional ciliary movement in the trachea. Required for normal, polarized cilia organization in brain ependymal epithelial cells. This is Unconventional myosin-Id (MYO1D) from Homo sapiens (Human).